We begin with the raw amino-acid sequence, 316 residues long: MLP-like protein 34 (316 aa).

This sequence belongs to the MLP family.

The protein is MLP-like protein 34 (MLP34) of Arabidopsis thaliana (Mouse-ear cress).